Reading from the N-terminus, the 94-residue chain is Co-chaperonin GroES (94 aa).

It belongs to the GroES chaperonin family. In terms of assembly, heptamer of 7 subunits arranged in a ring. Interacts with the chaperonin GroEL.

The protein resides in the cytoplasm. Functionally, together with the chaperonin GroEL, plays an essential role in assisting protein folding. The GroEL-GroES system forms a nano-cage that allows encapsulation of the non-native substrate proteins and provides a physical environment optimized to promote and accelerate protein folding. GroES binds to the apical surface of the GroEL ring, thereby capping the opening of the GroEL channel. The polypeptide is Co-chaperonin GroES (Streptococcus pneumoniae (strain ATCC BAA-255 / R6)).